A 325-amino-acid polypeptide reads, in one-letter code: tRNA(Ile)-lysidine synthase (325 aa).

34 to 39 lines the ATP pocket; the sequence is SGGADS.

This sequence belongs to the tRNA(Ile)-lysidine synthase family.

The protein resides in the cytoplasm. The enzyme catalyses cytidine(34) in tRNA(Ile2) + L-lysine + ATP = lysidine(34) in tRNA(Ile2) + AMP + diphosphate + H(+). In terms of biological role, ligates lysine onto the cytidine present at position 34 of the AUA codon-specific tRNA(Ile) that contains the anticodon CAU, in an ATP-dependent manner. Cytidine is converted to lysidine, thus changing the amino acid specificity of the tRNA from methionine to isoleucine. This is tRNA(Ile)-lysidine synthase from Rhodococcus jostii (strain RHA1).